The following is a 332-amino-acid chain: 2,3-diketo-L-gulonate reductase (332 aa).

The active-site Proton donor is His44. NAD(+) is bound by residues 168 to 174, 224 to 225, and 304 to 306; these read ITMVDMS, WK, and GHE.

The protein belongs to the LDH2/MDH2 oxidoreductase family. DlgD subfamily. As to quaternary structure, homodimer.

It is found in the cytoplasm. It catalyses the reaction 3-dehydro-L-gulonate + NAD(+) = 2,3-dioxo-L-gulonate + NADH + H(+). The catalysed reaction is 3-dehydro-L-gulonate + NADP(+) = 2,3-dioxo-L-gulonate + NADPH + H(+). In terms of biological role, catalyzes the reduction of 2,3-diketo-L-gulonate in the presence of NADH, to form 3-keto-L-gulonate. The chain is 2,3-diketo-L-gulonate reductase from Escherichia coli O8 (strain IAI1).